The chain runs to 287 residues: 26S proteasome non-ATPase regulatory subunit 8 (287 aa).

S43 is subject to Phosphoserine. The region spanning 99–268 is the PCI domain; the sequence is PSFERYMAQL…QQKPEDTTIP (170 aa). K234 participates in a covalent cross-link: Glycyl lysine isopeptide (Lys-Gly) (interchain with G-Cter in SUMO2).

Belongs to the proteasome subunit S14 family. As to quaternary structure, component of the 19S proteasome regulatory particle complex. The 26S proteasome consists of a 20S core particle (CP) and two 19S regulatory subunits (RP). The regulatory particle is made of a lid composed of 9 subunits including PSMD8, a base containing 6 ATPases and few additional components. Interacts with DDI2. Interacts with TASOR.

Component of the 26S proteasome, a multiprotein complex involved in the ATP-dependent degradation of ubiquitinated proteins. This complex plays a key role in the maintenance of protein homeostasis by removing misfolded or damaged proteins, which could impair cellular functions, and by removing proteins whose functions are no longer required. Therefore, the proteasome participates in numerous cellular processes, including cell cycle progression, apoptosis, or DNA damage repair. The chain is 26S proteasome non-ATPase regulatory subunit 8 (PSMD8) from Bos taurus (Bovine).